A 243-amino-acid polypeptide reads, in one-letter code: Uridylate kinase (243 aa).

12–15 (KLSG) is an ATP binding site. Positions 20 to 25 (GAKGFG) are involved in allosteric activation by GTP. The ATP site is built by Gly-55 and Arg-59. Residues Asp-74 and 135–142 (TGNPYFTT) contribute to the UMP site. Positions 163, 169, and 172 each coordinate ATP.

This sequence belongs to the UMP kinase family. Homohexamer.

Its subcellular location is the cytoplasm. The catalysed reaction is UMP + ATP = UDP + ADP. Its pathway is pyrimidine metabolism; CTP biosynthesis via de novo pathway; UDP from UMP (UMPK route): step 1/1. With respect to regulation, allosterically activated by GTP. Inhibited by UTP. In terms of biological role, catalyzes the reversible phosphorylation of UMP to UDP. This Symbiobacterium thermophilum (strain DSM 24528 / JCM 14929 / IAM 14863 / T) protein is Uridylate kinase.